The chain runs to 258 residues: 6-phosphogluconolactonase (258 aa).

Alanine 2 carries the post-translational modification N-acetylalanine. A Phosphoserine modification is found at serine 49. The residue at position 180 (lysine 180) is an N6-acetyllysine.

This sequence belongs to the glucosamine/galactosamine-6-phosphate isomerase family. 6-phosphogluconolactonase subfamily.

It is found in the cytoplasm. It catalyses the reaction 6-phospho-D-glucono-1,5-lactone + H2O = 6-phospho-D-gluconate + H(+). Its pathway is carbohydrate degradation; pentose phosphate pathway; D-ribulose 5-phosphate from D-glucose 6-phosphate (oxidative stage): step 2/3. Functionally, hydrolysis of 6-phosphogluconolactone to 6-phosphogluconate. This Bos taurus (Bovine) protein is 6-phosphogluconolactonase (PGLS).